Here is a 325-residue protein sequence, read N- to C-terminus: Olfactory receptor 5T18 (325 aa).

Over 1–22 the chain is Extracellular; that stretch reads MRNITEATFFVLKGLTDNNELQ. Asn-3 carries an N-linked (GlcNAc...) asparagine glycan. A run of 2 helical transmembrane segments spans residues 23 to 43 and 44 to 64; these read IILF…NVGL and IILV…LSVL. Over 65 to 97 the chain is Extracellular; sequence SSVDACYSTDITPNMLVGFMSKSKIISFYGCAT. Residues Cys-95 and Cys-187 are joined by a disulfide bond. The chain crosses the membrane as a helical span at residues 98–118; sequence QMFLAVTFGTTECFLLAAMAY. The Cytoplasmic segment spans residues 119-139; it reads DRYVAIHDPLLYAVSMSPRVY. Residues 140–160 form a helical membrane-spanning segment; the sequence is IPLIIASYAGGIVHAIIHTVA. Residues 161 to 194 lie on the Extracellular side of the membrane; the sequence is TFSLSFCRSNEVKHIFCDIPPLLAISCSETYVNE. The chain crosses the membrane as a helical span at residues 195 to 215; the sequence is LLLFFFVSFIELVTILIVLVS. Residues 216–234 are Cytoplasmic-facing; it reads YAFILLSILKMNSSEGRRK. A helical membrane pass occupies residues 235–255; sequence VFSTCGAHLTAVSIYYGTILF. Topologically, residues 256 to 269 are extracellular; that stretch reads MYVRPSSNYSLEHD. The helical transmembrane segment at 270-290 threads the bilayer; the sequence is MIVSTFYTIGIPMLNPIIYSL. Topologically, residues 291–325 are cytoplasmic; that stretch reads RNKDVKEAMKRVLRKKINIKHRIKKLNDFSVFLMP.

It belongs to the G-protein coupled receptor 1 family.

It is found in the cell membrane. Potential odorant receptor. The polypeptide is Olfactory receptor 5T18 (Mus musculus (Mouse)).